Consider the following 381-residue polypeptide: Pre-mRNA-splicing factor cwf28 (381 aa).

The segment at 1–21 is disordered; sequence MKRKAVLEAFSDSEDEDEKKL. Phosphoserine occurs at positions 11 and 13. A coiled-coil region spans residues 104 to 157; it reads AADNEIVDWKANNSNEKAQNKIATNKESTDILPEEVQLVLNDLNDDVKSANSAN. The segment at 262 to 381 is disordered; sequence LNSQNEHTEV…DRSYRSTRTL (120 aa). Residues 274 to 285 are compositionally biased toward polar residues; the sequence is KSNSIDNLTPSS. Phosphoserine occurs at positions 275 and 277. Composition is skewed to basic and acidic residues over residues 287 to 297, 306 to 332, and 362 to 375; these read LFRKRSRDNNL, KHLD…EYHS, and SDRY…DRSY.

This sequence belongs to the SPP2 family. In terms of assembly, belongs to the 40S cdc5-associated complex (or cwf complex), a spliceosome sub-complex reminiscent of a late-stage spliceosome composed of the U2, U5 and U6 snRNAs and at least brr2, cdc5, cwf2/prp3, cwf3/syf1, cwf4/syf3, cwf5/ecm2, spp42/cwf6, cwf7/spf27, cwf8, cwf9, cwf10, cwf11, cwf12, prp45/cwf13, cwf14, cwf15, cwf16, cwf17, cwf18, cwf19, cwf20, cwf21, cwf22, cwf23, cwf24, cwf25, cwf26, cyp7/cwf27, cwf28, cwf29/ist3, lea1, msl1, prp5/cwf1, prp10, prp12/sap130, prp17, prp22, sap61, sap62, sap114, sap145, slu7, smb1, smd1, smd3, smf1, smg1 and syf2.

It localises to the nucleus. Its function is as follows. Involved in spliceosome maturation and the first step of pre-mRNA splicing. The polypeptide is Pre-mRNA-splicing factor cwf28 (cwf28) (Schizosaccharomyces pombe (strain 972 / ATCC 24843) (Fission yeast)).